The following is a 61-amino-acid chain: Large ribosomal subunit protein bL28 (61 aa).

It belongs to the bacterial ribosomal protein bL28 family.

This chain is Large ribosomal subunit protein bL28, found in Lacticaseibacillus paracasei (strain ATCC 334 / BCRC 17002 / CCUG 31169 / CIP 107868 / KCTC 3260 / NRRL B-441) (Lactobacillus paracasei).